We begin with the raw amino-acid sequence, 147 residues long: uncharacterized protein (147 aa).

The HTH marR-type domain occupies 1–137; the sequence is MRDNTIGSLI…LYELMTKVHK (137 aa). Residues 53–76 constitute a DNA-binding region (H-T-H motif); the sequence is QMELAEKVTVTQGGISRMLTRLEK.

This is an uncharacterized protein from Bacillus cereus (strain ATCC 10987 / NRS 248).